We begin with the raw amino-acid sequence, 186 residues long: Adenine phosphoribosyltransferase (186 aa).

The protein belongs to the purine/pyrimidine phosphoribosyltransferase family. In terms of assembly, homodimer.

Its subcellular location is the cytoplasm. The enzyme catalyses AMP + diphosphate = 5-phospho-alpha-D-ribose 1-diphosphate + adenine. Its pathway is purine metabolism; AMP biosynthesis via salvage pathway; AMP from adenine: step 1/1. Functionally, catalyzes a salvage reaction resulting in the formation of AMP, that is energically less costly than de novo synthesis. The polypeptide is Adenine phosphoribosyltransferase (Xanthomonas campestris pv. campestris (strain 8004)).